The following is a 78-amino-acid chain: Large ribosomal subunit protein bL28 (78 aa).

A disordered region spans residues 1–21; sequence MSRVCQVTGKKPMVGNNRSHA.

The protein belongs to the bacterial ribosomal protein bL28 family.

The protein is Large ribosomal subunit protein bL28 of Shewanella loihica (strain ATCC BAA-1088 / PV-4).